Here is an 87-residue protein sequence, read N- to C-terminus: Large ribosomal subunit protein bL27c (87 aa).

A disordered region spans residues Met1–Arg20.

This sequence belongs to the bacterial ribosomal protein bL27 family.

It localises to the plastid. It is found in the chloroplast. The chain is Large ribosomal subunit protein bL27c from Gracilaria tenuistipitata var. liui (Red alga).